The sequence spans 1481 residues: Cystic fibrosis transmembrane conductance regulator (1481 aa).

The Cytoplasmic portion of the chain corresponds to 1 to 77 (MQRSPLEKAS…KLINALRRCF (77 aa)). A helical membrane pass occupies residues 78-98 (FWRFMFYGIILYLGEVTKAVQ). The 285-residue stretch at 81–365 (FMFYGIILYL…WAVQTWYDSL (285 aa)) folds into the ABC transmembrane type-1 1 domain. The Extracellular portion of the chain corresponds to 99–122 (PLLLGRIIASYDPDNKVERSIAIY). The helical transmembrane segment at 123-146 (LGIGLCLLFIVRTLLLHPAIFGLH) threads the bilayer. Residues 147 to 195 (HIGMQMRIAMFSLIYKKTLKLSSRVLDKISIGQLVSLLSNNLNKFDEGL) lie on the Cytoplasmic side of the membrane. Residues 196-216 (ALAHFVWIAPLQVTLLMGLLW) traverse the membrane as a helical segment. Residues 217 to 222 (DLLQAF) lie on the Extracellular side of the membrane. The chain crosses the membrane as a helical span at residues 223–243 (TFCGLAFLVVLALLQAGLGKM). Topologically, residues 244–298 (MMKYRDQRAGKINERLVITSEMIENIQSVKAYCWEEAMEKIIENLRQTELKLTRK) are cytoplasmic. The helical transmembrane segment at 299 to 319 (AAYVRYLNSSAFFFSGFFVVF) threads the bilayer. Residues 320–339 (LSVLPYALLKGIILRKIFTT) are Extracellular-facing. Residues 340–358 (ISFCIVLRMAVTRQFPWAV) traverse the membrane as a helical segment. The Cytoplasmic segment spans residues 359–858 (QTWYDSLGAI…YLRYITVHKS (500 aa)). ATP-binding positions include Trp-401, 457 to 464 (GSTGAGKT), and Gln-492. An ABC transporter 1 domain is found at 421–645 (ISNCDTSLFF…RPDFSSKLMG (225 aa)). Cys-523 is lipidated: S-palmitoyl cysteine. Phosphoserine occurs at positions 548 and 659. The segment at 653–831 (TAERRNSIIT…EEINEEDLRD (179 aa)) is disordered R region. At Ser-669 the chain carries Phosphoserine; by PKA. Phosphoserine is present on Ser-685. Residue Lys-687 forms a Glycyl lysine isopeptide (Lys-Gly) (interchain with G-Cter in ubiquitin) linkage. A phosphoserine mark is found at Ser-699 and Ser-711. Thr-716 is subject to Phosphothreonine. 5 positions are modified to phosphoserine: Ser-736, Ser-767, Ser-790, Ser-795, and Ser-813. The chain crosses the membrane as a helical span at residues 859-879 (LMFVLIWCLVVFLVEVAASLV). The ABC transmembrane type-1 2 domain occupies 859–1155 (LMFVLIWCLV…AVNSSIDVDS (297 aa)). Residues 880–918 (VLCLFPKILLQDKGNSTKNASNSYAVIITSTSSYYIFYI) lie on the Extracellular side of the membrane. N-linked (GlcNAc...) asparagine glycosylation is found at Asn-894 and Asn-898. The discontinuously helical transmembrane segment at 919 to 939 (YVGVADTLLALGLFRGLPLVH) threads the bilayer. Over 940–990 (TLITVSKTLHHKMLQSVLQAPMSTLNTLKTGGILNRFSKDIAVLDDLLPLT) the chain is Cytoplasmic. A helical transmembrane segment spans residues 991–1011 (IFDFIQLLLIVIGAVVVVSVL). Residues 1012–1013 (QP) lie on the Extracellular side of the membrane. The chain crosses the membrane as a helical span at residues 1014–1034 (YIFLATVPVIAAFILLRGYFL). Topologically, residues 1035-1095 (HTSQQLKQLE…TANWFLYLST (61 aa)) are cytoplasmic. A helical transmembrane segment spans residues 1096 to 1116 (LRWFQMRIEMIFVIFFIAVTF). At 1117–1130 (ISILTTGEGEGRVG) the chain is on the extracellular side. The chain crosses the membrane as a helical span at residues 1131–1151 (IILTLAMNIMGTLQWAVNSSI). The Cytoplasmic segment spans residues 1152-1481 (DVDSLMRSVS…TEEEVQETKL (330 aa)). The region spanning 1211-1444 (MTVKDLTAKY…KSLFRQAISP (234 aa)) is the ABC transporter 2 domain. ATP contacts are provided by residues Tyr-1220 and 1245 to 1252 (GRTGSGKS). An interaction with GORASP2 region spans residues 1387–1481 (RTLKQAFADC…TEEEVQETKL (95 aa)). The S-palmitoyl cysteine moiety is linked to residue Cys-1396. A Phosphoserine modification is found at Ser-1457. The PDZ-binding signature appears at 1479–1481 (TKL).

This sequence belongs to the ABC transporter superfamily. ABCC family. CFTR transporter (TC 3.A.1.202) subfamily. Monomer; does not require oligomerization for channel activity. May form oligomers in the membrane. Interacts with SLC26A3, SLC26A6 and NHERF1. Interacts with SHANK2. Interacts with MYO6. Interacts (via C-terminus) with GOPC (via PDZ domain); this promotes CFTR internalization and thereby decreases channel activity. Interacts with SLC4A7 through NHERF1. Found in a complex with MYO5B and RAB11A. Interacts with ANO1. Interacts with SLC26A8. Interacts with AHCYL1; the interaction increases CFTR activity. Interacts with CSE1L. The core-glycosylated form interacts with GORASP2 (via PDZ GRASP-type 1 domain) in respone to ER stress. Interacts with MARCHF2; the interaction leads to CFTR ubiqtuitination and degradation. Interacts with ADGRG2. Post-translationally, N-glycosylated. In terms of processing, phosphorylated; cAMP treatment promotes phosphorylation and activates the channel. Dephosphorylation decreases the ATPase activity (in vitro). Phosphorylation at PKA sites activates the channel. Phosphorylation at PKC sites enhances the response to phosphorylation by PKA. Phosphorylated by AMPK; this inhibits channel activity. Ubiquitinated, leading to its degradation in the lysosome. Deubiquitination by USP10 in early endosomes enhances its endocytic recycling to the cell membrane. Ubiquitinated by RNF185 during ER stress. Ubiquitinated by MARCHF2.

It localises to the apical cell membrane. Its subcellular location is the early endosome membrane. It is found in the cell membrane. The protein resides in the recycling endosome membrane. The protein localises to the endoplasmic reticulum membrane. It localises to the nucleus. The enzyme catalyses ATP + H2O + closed Cl(-) channel = ADP + phosphate + open Cl(-) channel.. The catalysed reaction is chloride(in) = chloride(out). It carries out the reaction hydrogencarbonate(in) = hydrogencarbonate(out). It catalyses the reaction ATP + H2O = ADP + phosphate + H(+). Epithelial ion channel that plays an important role in the regulation of epithelial ion and water transport and fluid homeostasis. Mediates the transport of chloride ions across the cell membrane. Possesses an intrinsic ATPase activity and utilizes ATP to gate its channel; the passive flow of anions through the channel is gated by cycles of ATP binding and hydrolysis by the ATP-binding domains. The ion channel is also permeable to HCO(3)(-); selectivity depends on the extracellular chloride concentration. Exerts its function also by modulating the activity of other ion channels and transporters. Contributes to the regulation of the pH and the ion content of the epithelial fluid layer. Modulates the activity of the epithelial sodium channel (ENaC) complex, in part by regulating the cell surface expression of the ENaC complex. May regulate bicarbonate secretion and salvage in epithelial cells by regulating the transporter SLC4A7. Can inhibit the chloride channel activity of ANO1. Plays a role in the chloride and bicarbonate homeostasis during sperm epididymal maturation and capacitation. The chain is Cystic fibrosis transmembrane conductance regulator from Ovis aries (Sheep).